Reading from the N-terminus, the 586-residue chain is Regulatory protein NPR3 (586 aa).

A Phosphoserine modification is found at S10. The BTB domain maps to 60-135 (SDAEIIVDGV…IYTGRLKPFP (76 aa)). The C2HC NPR-type zinc-finger motif lies at 138 to 152 (VSTCVDPVCSHDCCR). Zn(2+) is bound by residues C141, C146, H148, and C151. ANK repeat units follow at residues 261–291 (ERIG…TLDQ), 293–320 (NGLH…DVNY), and 324–353 (RGYT…NASE). The tract at residues 383 to 523 (ESSKARLCID…MAEYIDDDIL (141 aa)) is salicylic acid-binding core (SBC). Position 428 (R428) interacts with salicylate. The tract at residues 554 to 586 (YSKDKESKIARSCLSASSSPSSSSIRDDLHNTT) is disordered. The span at 565 to 577 (SCLSASSSPSSSS) shows a compositional bias: low complexity.

This sequence belongs to the plant 'ANKYRIN-BTB/POZ' family. 'NPR1-like' subfamily. Forms homodimers and heterodimers with NPR4 in the presence of salicylic acid (SA). Interacts with TGA2, TGA3, TGA5 and TGA6. Interacts with CUL3A, a core component of the cullin-RING ubiquitin ligases (CRL). Interacts with TGA2 in vivo in the nucleus. Binds to NPR1; this interaction is promoted by association with SA, probably due to conformational changes.

It localises to the nucleus. Its pathway is protein modification; protein ubiquitination. Functionally, salicylic acid (SA)-binding substrate-specific adapter of an E3 ubiquitin-protein ligase complex (CUL3-RBX1-BTB) which mediates the ubiquitination and subsequent proteasomal degradation of NPR1 in response to SA. Together with NPR4, acts as receptor of salicylic acid to monitor immunity in a NPR1-dependent manner and induce systemic acquired resistance (SAR). Involved in the regulation of basal defense responses against pathogens, and may be implicated in the cross-talk between the SA- and JA-dependent signaling pathways. In Arabidopsis thaliana (Mouse-ear cress), this protein is Regulatory protein NPR3.